Here is a 232-residue protein sequence, read N- to C-terminus: 5'-methylthioadenosine/S-adenosylhomocysteine nucleosidase (232 aa).

Glu12 functions as the Proton acceptor in the catalytic mechanism. Residues Gly78, Ile152, and 173–174 (ME) contribute to the substrate site. The active-site Proton donor is the Asp197.

The protein belongs to the PNP/UDP phosphorylase family. MtnN subfamily. In terms of assembly, homodimer.

It catalyses the reaction S-adenosyl-L-homocysteine + H2O = S-(5-deoxy-D-ribos-5-yl)-L-homocysteine + adenine. The catalysed reaction is S-methyl-5'-thioadenosine + H2O = 5-(methylsulfanyl)-D-ribose + adenine. The enzyme catalyses 5'-deoxyadenosine + H2O = 5-deoxy-D-ribose + adenine. The protein operates within amino-acid biosynthesis; L-methionine biosynthesis via salvage pathway; S-methyl-5-thio-alpha-D-ribose 1-phosphate from S-methyl-5'-thioadenosine (hydrolase route): step 1/2. Functionally, catalyzes the irreversible cleavage of the glycosidic bond in both 5'-methylthioadenosine (MTA) and S-adenosylhomocysteine (SAH/AdoHcy) to adenine and the corresponding thioribose, 5'-methylthioribose and S-ribosylhomocysteine, respectively. Also cleaves 5'-deoxyadenosine, a toxic by-product of radical S-adenosylmethionine (SAM) enzymes, into 5-deoxyribose and adenine. Thus, is required for in vivo function of the radical SAM enzymes biotin synthase and lipoic acid synthase, that are inhibited by 5'-deoxyadenosine accumulation. The sequence is that of 5'-methylthioadenosine/S-adenosylhomocysteine nucleosidase from Erwinia tasmaniensis (strain DSM 17950 / CFBP 7177 / CIP 109463 / NCPPB 4357 / Et1/99).